We begin with the raw amino-acid sequence, 143 residues long: Transcriptional regulator MraZ (143 aa).

SpoVT-AbrB domains lie at 5 to 47 (EYSH…PMPV) and 76 to 119 (AMEA…SDEN).

It belongs to the MraZ family. As to quaternary structure, forms oligomers.

It localises to the cytoplasm. The protein resides in the nucleoid. The chain is Transcriptional regulator MraZ from Leuconostoc citreum (strain KM20).